We begin with the raw amino-acid sequence, 655 residues long: Very long-chain specific acyl-CoA dehydrogenase, mitochondrial (655 aa).

The N-terminal 40 residues, 1–40 (MQAARIAPSLGRQLLRFGGGSSRPTALLGQPWPGPARRPY), are a transit peptide targeting the mitochondrion. The catalytic stretch occupies residues 41–482 (AGGAAQLALD…ALQGCMDKGK (442 aa)). N6-acetyllysine is present on lysine 51. An N6-acetyllysine; alternate modification is found at lysine 71. The residue at position 71 (lysine 71) is an N6-succinyllysine; alternate. The residue at position 195 (lysine 195) is an N6-succinyllysine. 214–223 (FCLTEPSSGS) provides a ligand contact to FAD. Cysteine 237 is subject to S-nitrosocysteine. Lysine 239 carries the post-translational modification N6-acetyllysine; alternate. The residue at position 239 (lysine 239) is an N6-succinyllysine; alternate. 249 to 251 (WIS) lines the FAD pocket. N6-acetyllysine; alternate occurs at positions 276 and 278. Residues lysine 276 and lysine 278 each carry the N6-succinyllysine; alternate modification. At lysine 298 the chain carries N6-acetyllysine. Lysine 331 is subject to N6-acetyllysine; alternate. Lysine 331 is modified (N6-succinyllysine; alternate). N6-succinyllysine is present on lysine 372. 461–463 (FEG) contributes to the substrate binding site. Glutamate 462 acts as the Proton acceptor in catalysis. 464–466 (TND) lines the FAD pocket. The residue at position 482 (lysine 482) is an N6-acetyllysine; alternate. An N6-succinyllysine; alternate modification is found at lysine 482. The membrane-anchoring stretch occupies residues 483-516 (ELSGLGSALKNPFGNAGLLLGEAGKQLRRRAGLG). Residues serine 517 and serine 522 each carry the phosphoserine modification. Residue lysine 550 is modified to N6-acetyllysine. Lysine 556 carries the N6-acetyllysine; alternate modification. Lysine 556 bears the N6-succinyllysine; alternate mark. FAD is bound at residue glutamine 562. The residue at position 639 (lysine 639) is an N6-succinyllysine.

The protein belongs to the acyl-CoA dehydrogenase family. In terms of assembly, homodimer. Homodimerizes after import into the mitochondrion. It depends on FAD as a cofactor. Post-translationally, S-nitrosylation at Cys-237 in liver improves catalytic efficiency.

It is found in the mitochondrion inner membrane. The catalysed reaction is a very-long-chain 2,3-saturated fatty acyl-CoA + oxidized [electron-transfer flavoprotein] + H(+) = a very-long-chain (2E)-enoyl-CoA + reduced [electron-transfer flavoprotein]. It catalyses the reaction dodecanoyl-CoA + oxidized [electron-transfer flavoprotein] + H(+) = (2E)-dodecenoyl-CoA + reduced [electron-transfer flavoprotein]. The enzyme catalyses tetradecanoyl-CoA + oxidized [electron-transfer flavoprotein] + H(+) = (2E)-tetradecenoyl-CoA + reduced [electron-transfer flavoprotein]. It carries out the reaction oxidized [electron-transfer flavoprotein] + hexadecanoyl-CoA + H(+) = (2E)-hexadecenoyl-CoA + reduced [electron-transfer flavoprotein]. The catalysed reaction is octadecanoyl-CoA + oxidized [electron-transfer flavoprotein] + H(+) = (2E)-octadecenoyl-CoA + reduced [electron-transfer flavoprotein]. It catalyses the reaction eicosanoyl-CoA + oxidized [electron-transfer flavoprotein] + H(+) = (2E)-eicosenoyl-CoA + reduced [electron-transfer flavoprotein]. The enzyme catalyses docosanoyl-CoA + oxidized [electron-transfer flavoprotein] + H(+) = (2E)-docosenoyl-CoA + reduced [electron-transfer flavoprotein]. It carries out the reaction tetracosanoyl-CoA + oxidized [electron-transfer flavoprotein] + H(+) = (2E)-tetracosenoyl-CoA + reduced [electron-transfer flavoprotein]. It functions in the pathway lipid metabolism; mitochondrial fatty acid beta-oxidation. Functionally, very long-chain specific acyl-CoA dehydrogenase is one of the acyl-CoA dehydrogenases that catalyze the first step of mitochondrial fatty acid beta-oxidation, an aerobic process breaking down fatty acids into acetyl-CoA and allowing the production of energy from fats. The first step of fatty acid beta-oxidation consists in the removal of one hydrogen from C-2 and C-3 of the straight-chain fatty acyl-CoA thioester, resulting in the formation of trans-2-enoyl-CoA. Among the different mitochondrial acyl-CoA dehydrogenases, very long-chain specific acyl-CoA dehydrogenase acts specifically on acyl-CoAs with saturated 12 to 24 carbons long primary chains. This is Very long-chain specific acyl-CoA dehydrogenase, mitochondrial from Macaca fascicularis (Crab-eating macaque).